The chain runs to 323 residues: Prostaglandin F synthase 2 (323 aa).

NADP(+)-binding positions include 20–24 (GFGTY) and aspartate 50. The Proton donor role is filled by tyrosine 55. Residue histidine 117 participates in substrate binding. Residues 166-167 (SN), glutamine 190, 216-221 (YAALGA), and 270-280 (KSFNKKRIKEN) contribute to the NADP(+) site.

This sequence belongs to the aldo/keto reductase family. Monomer.

The protein localises to the cytoplasm. It carries out the reaction prostaglandin F2alpha + NADP(+) = prostaglandin D2 + NADPH + H(+). It participates in lipid metabolism; prostaglandin biosynthesis. Its function is as follows. Catalyzes the reduction of PGD(2) and PGH(2) to PGF(2 alpha) and a stereoisomer, respectively. It has a broad substrate specificity and also reduces other carbonyl compounds. This chain is Prostaglandin F synthase 2, found in Bos taurus (Bovine).